Consider the following 245-residue polypeptide: Geranylgeranylglyceryl phosphate synthase (245 aa).

2 residues coordinate Mg(2+): D22 and S51. Residues 169–175 (YLEAGSG), 200–201 (GG), and 222–223 (GT) contribute to the sn-glycerol 1-phosphate site.

Belongs to the GGGP/HepGP synthase family. Group II subfamily. Homopentamer. It depends on Mg(2+) as a cofactor.

It is found in the cytoplasm. It carries out the reaction sn-glycerol 1-phosphate + (2E,6E,10E)-geranylgeranyl diphosphate = sn-3-O-(geranylgeranyl)glycerol 1-phosphate + diphosphate. Its pathway is membrane lipid metabolism; glycerophospholipid metabolism. Its activity is regulated as follows. Inhibited by EDTA in vitro. Functionally, prenyltransferase that catalyzes the transfer of the geranylgeranyl moiety of geranylgeranyl diphosphate (GGPP) to the C3 hydroxyl of sn-glycerol-1-phosphate (G1P). This reaction is the first ether-bond-formation step in the biosynthesis of archaeal membrane lipids. Cannot use sn-glycerol-3-phosphate (G3P) or dihydroxyacetonephosphate (DHAP) as substrate. The sequence is that of Geranylgeranylglyceryl phosphate synthase from Methanothermobacter marburgensis (strain ATCC BAA-927 / DSM 2133 / JCM 14651 / NBRC 100331 / OCM 82 / Marburg) (Methanobacterium thermoautotrophicum).